Consider the following 119-residue polypeptide: Basic phospholipase A2 acanthin-1 (119 aa).

Intrachain disulfides connect C11-C71, C27-C118, C29-C45, C44-C99, C51-C92, C60-C85, and C78-C90. Ca(2+) contacts are provided by Y28, G30, and G32. The active site involves H48. D49 lines the Ca(2+) pocket. D93 is a catalytic residue.

Ca(2+) serves as cofactor. In terms of tissue distribution, expressed by the venom gland.

Its subcellular location is the secreted. It carries out the reaction a 1,2-diacyl-sn-glycero-3-phosphocholine + H2O = a 1-acyl-sn-glycero-3-phosphocholine + a fatty acid + H(+). Functionally, snake venom phospholipase A2 (PLA2) that potently inhibits ADP-(IC(50)=10 nM) and collagen-induced (IC(50)=7 nM) platelet aggregation when tested on human whole blood. PLA2 catalyzes the calcium-dependent hydrolysis of the 2-acyl groups in 3-sn-phosphoglycerides. In Acanthophis antarcticus (Common death adder), this protein is Basic phospholipase A2 acanthin-1.